The primary structure comprises 273 residues: Non-homologous end joining protein Ku (273 aa).

Residues 13 to 190 (KLSLVTCPVA…FTGIEKKSDA (178 aa)) enclose the Ku domain. The disordered stretch occupies residues 227–251 (KKKAKKPSKAKASKSTKGDDEEKSN). Over residues 228–240 (KKAKKPSKAKASK) the composition is skewed to basic residues.

The protein belongs to the prokaryotic Ku family. Homodimer. Interacts with LigD.

Functionally, with LigD forms a non-homologous end joining (NHEJ) DNA repair enzyme, which repairs dsDNA breaks with reduced fidelity. Binds linear dsDNA with 5'- and 3'- overhangs but not closed circular dsDNA nor ssDNA. Recruits and stimulates the ligase activity of LigD. The sequence is that of Non-homologous end joining protein Ku from Allorhizobium ampelinum (strain ATCC BAA-846 / DSM 112012 / S4) (Agrobacterium vitis (strain S4)).